A 349-amino-acid chain; its full sequence is DNA fragmentation factor subunit beta (349 aa).

A CIDE-N domain is found at 7 to 83 (QPKCVKLRAL…LLTAGETWHG (77 aa)). Positions 319 to 349 (RSRIYRPQTGSRRKQPPRKQPPRKRPPRKRQ) are disordered. A compositionally biased stretch (basic residues) spans 329-349 (SRRKQPPRKQPPRKRPPRKRQ).

In terms of assembly, heterodimer of DFFA and DFFB. Interacts with H1-1.

Its subcellular location is the cytoplasm. The protein localises to the nucleus. With respect to regulation, inhibited by DFFA (DFF45). In terms of biological role, nuclease that induces DNA fragmentation and chromatin condensation during apoptosis. Degrades naked DNA and induces apoptotic morphology. The protein is DNA fragmentation factor subunit beta (Dffb) of Rattus norvegicus (Rat).